Here is a 346-residue protein sequence, read N- to C-terminus: Probable long-chain-alcohol O-fatty-acyltransferase 6 (346 aa).

The next 8 helical transmembrane spans lie at 7–27 (LFIQ…YLTP), 36–56 (LLSV…FSTV), 59–79 (SFTI…LFAL), 116–136 (FPKW…LQAY), 146–166 (FLLG…LTLI), 228–248 (FFAI…LYFY), 255–275 (TWEV…EVAL), and 289–309 (PAVS…WLFS).

This sequence belongs to the wax synthase family.

The protein resides in the membrane. It catalyses the reaction a long chain fatty alcohol + a fatty acyl-CoA = a wax ester + CoA. Catalyzes the final step in the synthesis of long-chain linear esters (waxes). The sequence is that of Probable long-chain-alcohol O-fatty-acyltransferase 6 (AT6) from Arabidopsis thaliana (Mouse-ear cress).